A 65-amino-acid polypeptide reads, in one-letter code: Large ribosomal subunit protein bL35 (65 aa).

Basic residues predominate over residues 1-43; the sequence is MPKMKTRRGAAKRFAKTGSGKFKRRKQGLRHILTKKTAKRKSR. Residues 1 to 49 are disordered; it reads MPKMKTRRGAAKRFAKTGSGKFKRRKQGLRHILTKKTAKRKSRLGQSAT.

The protein belongs to the bacterial ribosomal protein bL35 family.

The polypeptide is Large ribosomal subunit protein bL35 (Maridesulfovibrio salexigens (strain ATCC 14822 / DSM 2638 / NCIMB 8403 / VKM B-1763) (Desulfovibrio salexigens)).